A 304-amino-acid polypeptide reads, in one-letter code: tRNA U34 carboxymethyltransferase (304 aa).

Carboxy-S-adenosyl-L-methionine-binding positions include K73, W87, K92, G111, 133 to 135 (DPS), 160 to 161 (VE), Y180, and R295.

The protein belongs to the class I-like SAM-binding methyltransferase superfamily. CmoB family. In terms of assembly, homotetramer.

The enzyme catalyses carboxy-S-adenosyl-L-methionine + 5-hydroxyuridine(34) in tRNA = 5-carboxymethoxyuridine(34) in tRNA + S-adenosyl-L-homocysteine + H(+). Catalyzes carboxymethyl transfer from carboxy-S-adenosyl-L-methionine (Cx-SAM) to 5-hydroxyuridine (ho5U) to form 5-carboxymethoxyuridine (cmo5U) at position 34 in tRNAs. The polypeptide is tRNA U34 carboxymethyltransferase (Aliarcobacter butzleri (strain RM4018) (Arcobacter butzleri)).